Here is a 675-residue protein sequence, read N- to C-terminus: DNA ligase (675 aa).

Residues 43–47, 92–93, and Glu122 contribute to the NAD(+) site; these read DYEYD and SM. Residue Lys124 is the N6-AMP-lysine intermediate of the active site. The NAD(+) site is built by Arg145, Glu179, Lys295, and Lys319. Cys413, Cys416, Cys431, and Cys436 together coordinate Zn(2+). One can recognise a BRCT domain in the interval 597 to 675; the sequence is SPDGYYKGKK…ETEAIAKFEQ (79 aa).

This sequence belongs to the NAD-dependent DNA ligase family. LigA subfamily. Mg(2+) serves as cofactor. Requires Mn(2+) as cofactor.

It carries out the reaction NAD(+) + (deoxyribonucleotide)n-3'-hydroxyl + 5'-phospho-(deoxyribonucleotide)m = (deoxyribonucleotide)n+m + AMP + beta-nicotinamide D-nucleotide.. Functionally, DNA ligase that catalyzes the formation of phosphodiester linkages between 5'-phosphoryl and 3'-hydroxyl groups in double-stranded DNA using NAD as a coenzyme and as the energy source for the reaction. It is essential for DNA replication and repair of damaged DNA. The protein is DNA ligase of Pediococcus pentosaceus (strain ATCC 25745 / CCUG 21536 / LMG 10740 / 183-1w).